Consider the following 286-residue polypeptide: Translocon-associated protein subunit alpha (286 aa).

The signal sequence occupies residues 1–20; the sequence is MSSLRRLLLLLLLVFPATLL. The Lumenal portion of the chain corresponds to 21 to 207; sequence LRVGPGGSLA…EREDGLDGET (187 aa). Residues 37 to 75 are compositionally biased toward acidic residues; it reads EDEETVEDSIIEDEDDEAEVEEDEPTDLAEDKEEDDVSG. A disordered region spans residues 37–83; the sequence is EDEETVEDSIIEDEDDEAEVEEDEPTDLAEDKEEDDVSGEPEASPSA. Asn136 and Asn191 each carry an N-linked (GlcNAc...) asparagine glycan. A helical transmembrane segment spans residues 208-228; it reads IFMYMFLAGLGLLVVVGLHQL. Residues 229-286 lie on the Cytoplasmic side of the membrane; that stretch reads LESRKRKRPIQKVEMGTSSQNDVDMSWIPQETLNQINKASPRRLPRKRAQKRSVGSDE. Ser247 bears the Phosphoserine mark. The residue at position 260 (Thr260) is a Phosphothreonine. The segment at 261–286 is disordered; it reads LNQINKASPRRLPRKRAQKRSVGSDE. Residue Ser268 is modified to Phosphoserine. Basic residues predominate over residues 268–279; sequence SPRRLPRKRAQK.

The protein belongs to the TRAP-alpha family. In terms of assembly, heterotetramer of TRAP-alpha, TRAP-beta, TRAP-delta and TRAP-gamma. Interacts with palmitoylated calnexin (CALX), the interaction is required for efficient folding of glycosylated proteins. Post-translationally, phosphorylated in its cytoplasmic tail.

It is found in the endoplasmic reticulum membrane. Functionally, TRAP proteins are part of a complex whose function is to bind calcium to the ER membrane and thereby regulate the retention of ER resident proteins. May be involved in the recycling of the translocation apparatus after completion of the translocation process or may function as a membrane-bound chaperone facilitating folding of translocated proteins. The polypeptide is Translocon-associated protein subunit alpha (SSR1) (Bos taurus (Bovine)).